Reading from the N-terminus, the 283-residue chain is uncharacterized protein (283 aa).

Residues 1–23 (MFAFASFAISAIFFLCSFSYVSS) form the signal peptide.

The protein localises to the secreted. This is an uncharacterized protein from Schizosaccharomyces pombe (strain 972 / ATCC 24843) (Fission yeast).